A 301-amino-acid chain; its full sequence is ATP synthase gamma chain (301 aa).

Belongs to the ATPase gamma chain family. F-type ATPases have 2 components, CF(1) - the catalytic core - and CF(0) - the membrane proton channel. CF(1) has five subunits: alpha(3), beta(3), gamma(1), delta(1), epsilon(1). CF(0) has three main subunits: a, b and c.

It is found in the cell inner membrane. Produces ATP from ADP in the presence of a proton gradient across the membrane. The gamma chain is believed to be important in regulating ATPase activity and the flow of protons through the CF(0) complex. This is ATP synthase gamma chain from Bordetella pertussis (strain Tohama I / ATCC BAA-589 / NCTC 13251).